The chain runs to 233 residues: Large ribosomal subunit protein uL1 (233 aa).

The protein belongs to the universal ribosomal protein uL1 family. As to quaternary structure, part of the 50S ribosomal subunit.

Binds directly to 23S rRNA. The L1 stalk is quite mobile in the ribosome, and is involved in E site tRNA release. Its function is as follows. Protein L1 is also a translational repressor protein, it controls the translation of the L11 operon by binding to its mRNA. The polypeptide is Large ribosomal subunit protein uL1 (Polynucleobacter necessarius subsp. necessarius (strain STIR1)).